Here is a 242-residue protein sequence, read N- to C-terminus: DNA repair protein RecO (242 aa).

It belongs to the RecO family. Monomer.

Its function is as follows. Involved in DNA repair and RecF pathway recombination. The sequence is that of DNA repair protein RecO from Shigella flexneri serotype 5b (strain 8401).